Reading from the N-terminus, the 232-residue chain is uncharacterized protein (232 aa).

5 helical membrane-spanning segments follow: residues 4–24 (LLGV…YVFE), 42–62 (VLVG…LAVL), 100–120 (LFFI…ILHM), 145–165 (LAFV…FFTL), and 171–191 (GNLI…WVGF).

Its subcellular location is the cell membrane. This is an uncharacterized protein from Aquifex aeolicus (strain VF5).